The primary structure comprises 414 residues: Secernin-1 (414 aa).

Residue Ala2 is modified to N-acetylalanine. Residue Cys9 is part of the active site.

It belongs to the peptidase C69 family. Secernin subfamily.

The protein localises to the cytoplasm. Functionally, regulates exocytosis in mast cells. Increases both the extent of secretion and the sensitivity of mast cells to stimulation with calcium. This Homo sapiens (Human) protein is Secernin-1 (SCRN1).